The following is a 127-amino-acid chain: uncharacterized protein (127 aa).

This is an uncharacterized protein from Acanthamoeba polyphaga (Amoeba).